We begin with the raw amino-acid sequence, 330 residues long: Fructose-1,6-bisphosphatase class 1 (330 aa).

Positions 84, 103, 105, and 106 each coordinate Mg(2+). Substrate contacts are provided by residues 106–109 (DGSS), Asn196, and Lys262. Glu268 lines the Mg(2+) pocket.

Belongs to the FBPase class 1 family. Homotetramer. It depends on Mg(2+) as a cofactor.

It is found in the cytoplasm. It catalyses the reaction beta-D-fructose 1,6-bisphosphate + H2O = beta-D-fructose 6-phosphate + phosphate. It participates in carbohydrate biosynthesis; gluconeogenesis. This is Fructose-1,6-bisphosphatase class 1 from Shewanella putrefaciens (strain CN-32 / ATCC BAA-453).